The primary structure comprises 945 residues: MTEHVQPANPSDATPQHRYTAELAGQIEQRWQDRWSEEGTFNAPNPVGPLAGDVPADKLFVQDMFPYPSGTGLHVGHPLGYIATDVFARYHRMQGHNVLHTLGYDAFGLPAEQYAVQTGTHPRTTTEANIVNMKRQLRRLGLGHDERRTFATTDTDFYHWTQWIFLQIHDAWFDKEAGKARRISELEAEFVSGARSLEDGREWASLSVSEKEAVLDSYRLVYHSDSMVNWCPGLGTVLANEEVTADGRSDRGNFPVFRKHLQQWMMRITAYSDRLVDDLEYLDWPEKVKTMQRNWIGRSHGAQVKFQADGHEIEVFTTRPDTLFGATYVTLAPEHELVDDIVAAEWPRGVDSRWTGGAATPAEAVAAYRKSIAAKSDLERQEYKEKTGVFLGTYAVNPVNGHKLPVFIADYVLTGYGTGAIMAVPGHDHRDYEFATEFGLDIVEVISGGDLTKDAYTGDGTIVNSDFLNGMSVADAKKAITERLEADGTGKGTIQYKLRDWLFARQRYWGEPFPIVYDAEGNAHALPESSLPVELPEVEDYAPVSFDPDDASSEPSPPLAKAVDWVNVELDLGDGLQTYRRDTNVMPQWAGSSWYQLRYIDPTNPDVFCDKENERYWTGPRPEIHGPNDPGGVDLYVGGVEHAVLHLLYSRFWHKVLFDLGYVSSSEPYRRLYNQGYIQAYAYTDARGVYVPADEVEEKDGKFFHQGVEVNREYGKMGKSLKNSVSPDEICEEYGADTLRVYEMSMGPLDTSRPWATKDVVGAQRFLQRAWRVVVDEESGALRVTDDAPAEDTLRALNKAIAGVSEDYTALRDNTAAAKLIEYTNHLTKAYPGGAPRSVVEPLVLMLAPLAPHLAEELWSRLGHEKSLAHGPFPVAEEKWLVEDTVEYPIQVNGKVRSRVTVAADAPREEIEKIALADDKIVALLDGQDPRKVIVVPGKMVNIVR.

A 'HIGH' region motif is present at residues 66-77 (PYPSGTGLHVGH). Positions 716–720 (KMGKS) match the 'KMSKS' region motif. Lys719 is an ATP binding site.

It belongs to the class-I aminoacyl-tRNA synthetase family.

Its subcellular location is the cytoplasm. It carries out the reaction tRNA(Leu) + L-leucine + ATP = L-leucyl-tRNA(Leu) + AMP + diphosphate. This Rhodococcus jostii (strain RHA1) protein is Leucine--tRNA ligase.